The sequence spans 415 residues: Peptide chain release factor subunit 1-1 (415 aa).

The protein belongs to the eukaryotic release factor 1 family. As to quaternary structure, heterodimer of two subunits, one of which binds GTP.

It localises to the cytoplasm. In terms of biological role, directs the termination of nascent peptide synthesis (translation) in response to the termination codons UAA, UAG and UGA. The protein is Peptide chain release factor subunit 1-1 of Methanosarcina acetivorans (strain ATCC 35395 / DSM 2834 / JCM 12185 / C2A).